Consider the following 638-residue polypeptide: Chaperone protein DnaK (638 aa).

The residue at position 200 (Thr-200) is a Phosphothreonine; by autocatalysis. Positions 599–623 are disordered; the sequence is LHMAATAEQQSASTGAGAGSSAKVD. Residues 609–620 are compositionally biased toward low complexity; sequence SASTGAGAGSSA.

This sequence belongs to the heat shock protein 70 family.

Acts as a chaperone. The polypeptide is Chaperone protein DnaK (Xylella fastidiosa (strain M12)).